The chain runs to 602 residues: MNMSHLLQNFANKKIITLVDFYFSQFISKKNSIIMLISACVSFESKNGHIFLPIEYFEKNCFFSISNKQFINKILKCLNKKKINWSLELSEHISCGDGSIITPLVFYKDKIYLYKIWKAEKKILERLYEKNQFDTIDTQQCLNILNNLFSKKKHDLQKIAVILTLINNIIFITGGPGTGKTTIILKIIIALIKNAKKKIKIQLSAPTGKATENLIEILNDKWLNRYLLKEEKKQFSFNPIMTIHQLLGISKKSEKIFFNKNNLLMIDILIIDEASMIDILMMSNILSALSKKTKIIFIGDHNQLKPVKSSSILKYICSYAEDGYSLKTQSILQEITQNSIINYKINKKNTSYISDKICVLKKSYRFEKKTGIYILSNAVYNKETKIFEKLFKNSIENVFFYEINSEIEYKKMINIIINNNKIFWRKIYEKKNIKEIIKTFKNHQILCIVKNGFFGVNFINKILEEEMYKRNIFNKRFYINNKLWYIGKPIIITENNQCLGIFNGEIGITNLSQKNTLQVSFLKKDNFIENIPIEILKNYKTSWSITVHKAQGSEFNNISLILPNKNLKILKKDILYTGITRTRKQLNIFSTKEIFIKTVLKN.

174–181 serves as a coordination point for ATP; the sequence is GGPGTGKT.

Belongs to the RecD family. In terms of assembly, heterotrimer of RecB, RecC and RecD. All subunits contribute to DNA-binding.

The catalysed reaction is Couples ATP hydrolysis with the unwinding of duplex DNA at the replication fork by translocating in the 5'-3' direction. This creates two antiparallel DNA single strands (ssDNA). The leading ssDNA polymer is the template for DNA polymerase III holoenzyme which synthesizes a continuous strand.. It carries out the reaction ATP + H2O = ADP + phosphate + H(+). Functionally, a helicase/nuclease that prepares dsDNA breaks (DSB) for recombinational DNA repair. Binds to DSBs and unwinds DNA via a highly rapid and processive ATP-dependent bidirectional helicase activity. Unwinds dsDNA until it encounters a Chi (crossover hotspot instigator) sequence from the 3' direction. Cuts ssDNA a few nucleotides 3' to the Chi site. The properties and activities of the enzyme are changed at Chi. The Chi-altered holoenzyme produces a long 3'-ssDNA overhang and facilitates RecA-binding to the ssDNA for homologous DNA recombination and repair. Holoenzyme degrades any linearized DNA that is unable to undergo homologous recombination. In the holoenzyme this subunit has ssDNA-dependent ATPase and 5'-3' helicase activity. When added to pre-assembled RecBC greatly stimulates nuclease activity and augments holoenzyme processivity. Negatively regulates the RecA-loading ability of RecBCD. This Buchnera aphidicola subsp. Schizaphis graminum (strain Sg) protein is RecBCD enzyme subunit RecD.